The following is a 321-amino-acid chain: Annexin B10 (321 aa).

Annexin repeat units follow at residues 15 to 86 (FDAS…GLMM), 87 to 158 (PPVE…LIVT), 171 to 243 (GQAK…AIVE), and 247 to 319 (SPAA…ALLG).

The protein belongs to the annexin family.

The protein is Annexin B10 (AnxB10) of Drosophila melanogaster (Fruit fly).